A 371-amino-acid chain; its full sequence is Queuine tRNA-ribosyltransferase (371 aa).

The Proton acceptor role is filled by Asp-90. Residues Asp-90 to Phe-94, Asp-144, Gln-188, and Gly-215 contribute to the substrate site. The RNA binding stretch occupies residues Gly-246 to Asp-252. The active-site Nucleophile is Asp-265. Residues Thr-270–Arg-274 form an RNA binding; important for wobble base 34 recognition region. The Zn(2+) site is built by Cys-303, Cys-305, Cys-308, and His-334.

This sequence belongs to the queuine tRNA-ribosyltransferase family. Homodimer. Within each dimer, one monomer is responsible for RNA recognition and catalysis, while the other monomer binds to the replacement base PreQ1. It depends on Zn(2+) as a cofactor.

It carries out the reaction 7-aminomethyl-7-carbaguanine + guanosine(34) in tRNA = 7-aminomethyl-7-carbaguanosine(34) in tRNA + guanine. The protein operates within tRNA modification; tRNA-queuosine biosynthesis. Catalyzes the base-exchange of a guanine (G) residue with the queuine precursor 7-aminomethyl-7-deazaguanine (PreQ1) at position 34 (anticodon wobble position) in tRNAs with GU(N) anticodons (tRNA-Asp, -Asn, -His and -Tyr). Catalysis occurs through a double-displacement mechanism. The nucleophile active site attacks the C1' of nucleotide 34 to detach the guanine base from the RNA, forming a covalent enzyme-RNA intermediate. The proton acceptor active site deprotonates the incoming PreQ1, allowing a nucleophilic attack on the C1' of the ribose to form the product. After dissociation, two additional enzymatic reactions on the tRNA convert PreQ1 to queuine (Q), resulting in the hypermodified nucleoside queuosine (7-(((4,5-cis-dihydroxy-2-cyclopenten-1-yl)amino)methyl)-7-deazaguanosine). The sequence is that of Queuine tRNA-ribosyltransferase from Neisseria meningitidis serogroup B (strain ATCC BAA-335 / MC58).